The sequence spans 421 residues: L-Ala-D/L-amino acid epimerase (421 aa).

Substrate-binding positions include T193 and K218 to K220. 3 residues coordinate Mg(2+): D247, E275, and D304. Substrate-binding positions include K328 and D380–D382.

It belongs to the mandelate racemase/muconate lactonizing enzyme family. The cofactor is Mg(2+).

Its function is as follows. Catalyzes the epimerization of various hydrophobic and polar dipeptides. Has epimerase activity with L-Ala-L-Ala, L-Ala-L-Ser, L-Ala-L-Thr and L-Ala-L-Trp (in vitro). The sequence is that of L-Ala-D/L-amino acid epimerase from Populus trichocarpa (Western balsam poplar).